The sequence spans 62 residues: Potassium channel toxin kappa-KTx 1.4 (62 aa).

A signal peptide spans 1–26 (MKSCLINVSLLILLLLPILGYASVNA). Positions 27–38 (ESIDGENDFEEE) are excised as a propeptide. Disulfide bonds link Cys-43-Cys-61 and Cys-47-Cys-57.

It belongs to the short scorpion toxin superfamily. Potassium channel inhibitor kappa-KTx family. Kappa-KTx 1 subfamily. As to expression, expressed by the venom gland.

The protein resides in the secreted. In terms of biological role, shows structural homology with WaTx suggesting that it acts as a cell-penetrating peptide (CPP) with defensive purpose that induces pain by specifically activating mammalian sensory neuron TRPA1 channels. Has no effect on the voltage-gated potassium channels tested. This is Potassium channel toxin kappa-KTx 1.4 from Heterometrus petersii (Asian forest scorpion).